Consider the following 429-residue polypeptide: C4-dicarboxylate transport protein (429 aa).

8 helical membrane-spanning segments follow: residues 9 to 29 (VLYVQVIFAIIVGVILGHYYP), 45 to 65 (LIKMVIGPIIFCTVVTGIAGM), 79 to 99 (LLYFEIVSTFALLLGLAATHI), 149 to 169 (GEILQILLIALLFGSVLAHLG), 185 to 205 (VLFGIVHIVTKLAPIGAFGAM), 223 to 243 (LIGTFYLTSVVFVLVVLGTIA), 308 to 328 (IYMTMAVLFIAQATNIELTWM), and 356 to 376 (AATLAVVPTIPLSGMVLILGI).

Belongs to the dicarboxylate/amino acid:cation symporter (DAACS) (TC 2.A.23) family.

It localises to the cell inner membrane. Its function is as follows. Responsible for the transport of dicarboxylates such as succinate, fumarate, and malate from the periplasm across the membrane. The chain is C4-dicarboxylate transport protein from Burkholderia lata (strain ATCC 17760 / DSM 23089 / LMG 22485 / NCIMB 9086 / R18194 / 383).